Consider the following 162-residue polypeptide: Auxin-responsive protein SAUR36 (162 aa).

The protein belongs to the ARG7 family. Expressed in embryo, endosperm, growing hypocotyls and shoot apical meristems.

Its function is as follows. Acts a positive regulator of leaf senescence and may mediate auxin-induced leaf senescence. Plays a role in the regulation of seed germination by gibberellins and abscisic acid (ABA). Plays a role in the regulation of light-dependent hypocotyl elongation. The polypeptide is Auxin-responsive protein SAUR36 (Arabidopsis thaliana (Mouse-ear cress)).